Consider the following 60-residue polypeptide: MRAKEIREMTSEDLVVKCKELKEELFNLKFQLSLGQLTNTAKIREIRREIARINTILNER.

Belongs to the universal ribosomal protein uL29 family.

In Fusobacterium nucleatum subsp. nucleatum (strain ATCC 25586 / DSM 15643 / BCRC 10681 / CIP 101130 / JCM 8532 / KCTC 2640 / LMG 13131 / VPI 4355), this protein is Large ribosomal subunit protein uL29.